The primary structure comprises 137 residues: Large-conductance mechanosensitive channel (137 aa).

2 consecutive transmembrane segments (helical) span residues 10 to 30 (FAMR…AAFG) and 76 to 96 (GAFI…FMAI).

This sequence belongs to the MscL family. Homopentamer.

It localises to the cell inner membrane. Its function is as follows. Channel that opens in response to stretch forces in the membrane lipid bilayer. May participate in the regulation of osmotic pressure changes within the cell. This Pectobacterium carotovorum subsp. carotovorum (strain PC1) protein is Large-conductance mechanosensitive channel.